The chain runs to 284 residues: MSAIDDLPPLREVIRQHALSARKSLGQNFLLDLNLTARIARAAAPLDNSTIVEIGPGPGGLTRALLALGARRVVAIEHDERAIPALQDISARYPGRLEIVHGDAMTFDPRPLLNGESAKIVANLPYNIATQLLINWLTTEPWPPWYDMMVLMFQREVGERIVAREDEEAYGRLGVLANWRCETKILFDIAPSAFVPPPKVTSSVVRLVPRAEPLPCDRKMLEQVAAAAFGQRRKMLRQSLKSLGVDPARLAQAAGVDATRRAETIPISGFVAMARELADIRSEG.

S-adenosyl-L-methionine-binding residues include asparagine 28, leucine 30, glycine 55, glutamate 77, aspartate 103, and asparagine 123.

The protein belongs to the class I-like SAM-binding methyltransferase superfamily. rRNA adenine N(6)-methyltransferase family. RsmA subfamily.

The protein localises to the cytoplasm. It catalyses the reaction adenosine(1518)/adenosine(1519) in 16S rRNA + 4 S-adenosyl-L-methionine = N(6)-dimethyladenosine(1518)/N(6)-dimethyladenosine(1519) in 16S rRNA + 4 S-adenosyl-L-homocysteine + 4 H(+). Functionally, specifically dimethylates two adjacent adenosines (A1518 and A1519) in the loop of a conserved hairpin near the 3'-end of 16S rRNA in the 30S particle. May play a critical role in biogenesis of 30S subunits. This is Ribosomal RNA small subunit methyltransferase A from Bradyrhizobium diazoefficiens (strain JCM 10833 / BCRC 13528 / IAM 13628 / NBRC 14792 / USDA 110).